The following is a 302-amino-acid chain: Protoheme IX farnesyltransferase (302 aa).

9 consecutive transmembrane segments (helical) span residues 24–44, 48–68, 97–117, 120–140, 147–167, 174–194, 221–241, 245–265, and 282–302; these read VVSL…FSGY, FFSV…AGAL, AALV…ELAV, LSAV…TVYL, NIVV…AAVA, SLVL…ALAL, ILCY…LRFS, YMIV…NVYL, and FLLF…GMLI.

This sequence belongs to the UbiA prenyltransferase family. Protoheme IX farnesyltransferase subfamily.

The protein resides in the cell inner membrane. It carries out the reaction heme b + (2E,6E)-farnesyl diphosphate + H2O = Fe(II)-heme o + diphosphate. Its pathway is porphyrin-containing compound metabolism; heme O biosynthesis; heme O from protoheme: step 1/1. Functionally, converts heme B (protoheme IX) to heme O by substitution of the vinyl group on carbon 2 of heme B porphyrin ring with a hydroxyethyl farnesyl side group. This chain is Protoheme IX farnesyltransferase, found in Neorickettsia sennetsu (strain ATCC VR-367 / Miyayama) (Ehrlichia sennetsu).